The following is a 131-amino-acid chain: Small ribosomal subunit protein uS8 (131 aa).

The protein belongs to the universal ribosomal protein uS8 family. Part of the 30S ribosomal subunit. Contacts proteins S5 and S12.

In terms of biological role, one of the primary rRNA binding proteins, it binds directly to 16S rRNA central domain where it helps coordinate assembly of the platform of the 30S subunit. The sequence is that of Small ribosomal subunit protein uS8 from Blochmanniella pennsylvanica (strain BPEN).